The primary structure comprises 335 residues: MKLKLKNVFLAYFLVSIAGLLYALVQLGQPCDCLPPLRAAAEQLRQKDLRISQLQADLRRPPPVPAQPPEPEALPTIYVITPTYARLVQKAELVRLSQTLSLVPRLHWLLVEDAESPTPLVSGLLAASGLLFTHLAVLTPKAQRLREGEPGWVRPRGVEQRNKALDWLRGKGGAVGGEKDPPPPGTQGVVYFADDDNTYSRELFKEMRWTRGVSVWPVGLVGGLRFEGPQVQDGRVVGFHTAWEPNRPFPLDMAGFAVALPLLLAKPNAQFDATAPRGHLESSLLSHLVDPKDLEPRAANCTQVLVWHTRTEKPKMKQEEQLQRQGQGSDPAIEV.

The Cytoplasmic portion of the chain corresponds to 1–7; sequence MKLKLKN. A helical; Signal-anchor for type II membrane protein membrane pass occupies residues 8–28; the sequence is VFLAYFLVSIAGLLYALVQLG. At 29–335 the chain is on the lumenal side; sequence QPCDCLPPLR…GQGSDPAIEV (307 aa). Residues 82–84, D113, R156, R161, and 194–196 contribute to the UDP-alpha-D-glucuronate site; these read PTY and DDD. D196 provides a ligand contact to Mn(2+). Residues 243–252 form an interaction with galactose moiety of substrate glycoprotein region; it reads WEPNRPFPLD. E281 functions as the Proton donor/acceptor in the catalytic mechanism. N300 is a glycosylation site (N-linked (GlcNAc...) asparagine). A UDP-alpha-D-glucuronate-binding site is contributed by 308–310; it reads HTR. Basic and acidic residues predominate over residues 312 to 322; it reads EKPKMKQEEQL. Residues 312–335 form a disordered region; it reads EKPKMKQEEQLQRQGQGSDPAIEV.

Belongs to the glycosyltransferase 43 family. Homodimer; disulfide-linked. Interacts with PXYLP1; the interaction increases the 2-phosphoxylose phosphatase activity of PXYLP1 during completion of linkage region formation in a B3GAT3-mediated manner. Mn(2+) serves as cofactor. In terms of processing, N-glycosylated. In terms of tissue distribution, expressed in heart, aorta, bone, and also in osteoblasts.

Its subcellular location is the golgi apparatus membrane. The protein resides in the golgi apparatus. The protein localises to the cis-Golgi network. The catalysed reaction is 3-O-(beta-D-galactosyl-(1-&gt;3)-beta-D-galactosyl-(1-&gt;4)-beta-D-xylosyl)-L-seryl-[protein] + UDP-alpha-D-glucuronate = 3-O-(beta-D-GlcA-(1-&gt;3)-beta-D-Gal-(1-&gt;3)-beta-D-Gal-(1-&gt;4)-beta-D-Xyl)-L-seryl-[protein] + UDP + H(+). It participates in protein modification; protein glycosylation. Functionally, glycosaminoglycans biosynthesis. Involved in forming the linkage tetrasaccharide present in heparan sulfate and chondroitin sulfate. Transfers a glucuronic acid moiety from the uridine diphosphate-glucuronic acid (UDP-GlcUA) to the common linkage region trisaccharide Gal-beta-1,3-Gal-beta-1,4-Xyl covalently bound to a Ser residue at the glycosaminylglycan attachment site of proteoglycans. Can also play a role in the biosynthesis of l2/HNK-1 carbohydrate epitope on glycoproteins. Stimulates 2-phosphoxylose phosphatase activity of PXYLP1 in presence of uridine diphosphate-glucuronic acid (UDP-GlcUA) during completion of linkage region formation. The sequence is that of Galactosylgalactosylxylosylprotein 3-beta-glucuronosyltransferase 3 (B3gat3) from Mus musculus (Mouse).